The sequence spans 78 residues: Defensin-like protein (78 aa).

The N-terminal stretch at 1–31 is a signal peptide; the sequence is MGRSIRLFATFFLIAMLFLSTEMGPMTSAEA. 4 disulfides stabilise this stretch: C34/C78, C45/C65, C51/C72, and C55/C74.

It belongs to the DEFL family. In terms of tissue distribution, predominantly expressed in the pistil during all stages of flower development.

The protein resides in the secreted. Its function is as follows. May be involved in the defense of the pistil against pathogen infection. The polypeptide is Defensin-like protein (Petunia integrifolia (Violet-flowered petunia)).